Here is a 399-residue protein sequence, read N- to C-terminus: Dual-specificity RNA methyltransferase RlmN (399 aa).

Catalysis depends on Glu116, which acts as the Proton acceptor. In terms of domain architecture, Radical SAM core spans 122–352 (SEDRLTLCIS…VLLRRSMGRD (231 aa)). Cys129 and Cys357 form a disulfide bridge. [4Fe-4S] cluster-binding residues include Cys136, Cys140, and Cys143. Residues 185–186 (GE), Ser217, 238–240 (SLN), and Asn314 contribute to the S-adenosyl-L-methionine site. The active-site S-methylcysteine intermediate is the Cys357.

Belongs to the radical SAM superfamily. RlmN family. [4Fe-4S] cluster serves as cofactor.

The protein localises to the cytoplasm. The enzyme catalyses adenosine(2503) in 23S rRNA + 2 reduced [2Fe-2S]-[ferredoxin] + 2 S-adenosyl-L-methionine = 2-methyladenosine(2503) in 23S rRNA + 5'-deoxyadenosine + L-methionine + 2 oxidized [2Fe-2S]-[ferredoxin] + S-adenosyl-L-homocysteine. It carries out the reaction adenosine(37) in tRNA + 2 reduced [2Fe-2S]-[ferredoxin] + 2 S-adenosyl-L-methionine = 2-methyladenosine(37) in tRNA + 5'-deoxyadenosine + L-methionine + 2 oxidized [2Fe-2S]-[ferredoxin] + S-adenosyl-L-homocysteine. Specifically methylates position 2 of adenine 2503 in 23S rRNA and position 2 of adenine 37 in tRNAs. m2A2503 modification seems to play a crucial role in the proofreading step occurring at the peptidyl transferase center and thus would serve to optimize ribosomal fidelity. In Bdellovibrio bacteriovorus (strain ATCC 15356 / DSM 50701 / NCIMB 9529 / HD100), this protein is Dual-specificity RNA methyltransferase RlmN.